Here is a 136-residue protein sequence, read N- to C-terminus: Large ribosomal subunit protein bL19 (136 aa).

It belongs to the bacterial ribosomal protein bL19 family.

In terms of biological role, this protein is located at the 30S-50S ribosomal subunit interface and may play a role in the structure and function of the aminoacyl-tRNA binding site. This is Large ribosomal subunit protein bL19 from Xylella fastidiosa (strain M23).